Consider the following 553-residue polypeptide: Hydroxylamine reductase (553 aa).

Residues Cys3, Cys6, Cys18, and Cys25 each coordinate [2Fe-2S] cluster. Hybrid [4Fe-2O-2S] cluster is bound by residues His252, Glu276, Cys320, Cys408, Cys436, Cys461, Glu495, and Lys497. A Cysteine persulfide modification is found at Cys408.

Belongs to the HCP family. It depends on [2Fe-2S] cluster as a cofactor. The cofactor is hybrid [4Fe-2O-2S] cluster.

It is found in the cytoplasm. It carries out the reaction A + NH4(+) + H2O = hydroxylamine + AH2 + H(+). Functionally, catalyzes the reduction of hydroxylamine to form NH(3) and H(2)O. This chain is Hydroxylamine reductase, found in Photobacterium phosphoreum.